A 77-amino-acid polypeptide reads, in one-letter code: MPTKAGTKSTANKKTTKGPSKSGSAKGHTGKTHATALHHGMLYKDMVNIAKSKGIPIYQNGSRLTKSELEKKIKRSK.

A compositionally biased stretch (polar residues) spans 1–12; it reads MPTKAGTKSTAN. A disordered region spans residues 1-38; it reads MPTKAGTKSTANKKTTKGPSKSGSAKGHTGKTHATALH. Positions 17-27 are enriched in low complexity; sequence KGPSKSGSAKG.

This sequence belongs to the asfivirus P10 family.

The protein resides in the virion. Functionally, may play a role in genome packaging through direct interaction with viral DNA. Binds to ssDNA and dsDNA with the same apparent affinity in vitro. The protein is Structural DNA-binding protein p10 of Ornithodoros (relapsing fever ticks).